The primary structure comprises 236 residues: Mitochondrial coenzyme A diphosphatase NUDT8 (236 aa).

The 148-residue stretch at 25 to 172 (LRARPASAAV…HFRYTLPVFL (148 aa)) folds into the Nudix hydrolase domain. Lys70 carries the N6-succinyllysine modification. The short motif at 70 to 91 (KCDPADQDVVHTALRETREELG) is the Nudix box element. Residues Glu85 and Glu89 each contribute to the Mg(2+) site.

The protein belongs to the Nudix hydrolase family. Monomer. Mg(2+) is required as a cofactor. Mn(2+) serves as cofactor.

The protein resides in the mitochondrion. The catalysed reaction is an acyl-CoA + H2O = an acyl-4'-phosphopantetheine + adenosine 3',5'-bisphosphate + 2 H(+). It catalyses the reaction CoA + H2O = (R)-4'-phosphopantetheine + adenosine 3',5'-bisphosphate + 2 H(+). It carries out the reaction acetyl-CoA + H2O = S-acetyl-4'-phosphopantetheine + adenosine 3',5'-bisphosphate + 2 H(+). The enzyme catalyses butanoyl-CoA + H2O = S-butanoyl-4'-phosphopantetheine + adenosine 3',5'-bisphosphate + 2 H(+). The catalysed reaction is hexanoyl-CoA + H2O = hexanoyl-4'-phosphopantetheine + adenosine 3',5'-bisphosphate + 2 H(+). It catalyses the reaction octanoyl-CoA + H2O = S-octanoyl-4'-phosphopantetheine + adenosine 3',5'-bisphosphate + 2 H(+). It carries out the reaction propanoyl-CoA + H2O = propanoyl-4'-phosphopantetheine + adenosine 3',5'-bisphosphate + 2 H(+). The enzyme catalyses malonyl-CoA + H2O = malonyl-4'-phosphopantetheine + adenosine 3',5'-bisphosphate + 2 H(+). The catalysed reaction is succinyl-CoA + H2O = succinyl-4'-phosphopantetheine + adenosine 3',5'-bisphosphate + 2 H(+). It catalyses the reaction a 5'-end CoA-ribonucleoside in mRNA + H2O = a 5'-end phospho-adenosine-phospho-ribonucleoside in mRNA + (R)-4'-phosphopantetheine + 2 H(+). Functionally, acyl-CoA diphosphatase that mediates the hydrolysis of a wide range of CoA and CoA esters yielding 3',5'-ADP and the corresponding 4'-phosphopantetheine derivative as products. Hydrolyzes short- and medium-chain acyl-CoAs, exhibiting the highest activity toward free CoA, hexanoyl-CoA, and octanoyl-CoA and the lowest activity against acetyl-CoA. Exhibits decapping activity towards dpCoA-capped RNAs in vitro. This Homo sapiens (Human) protein is Mitochondrial coenzyme A diphosphatase NUDT8 (NUDT8).